The primary structure comprises 949 residues: Serine/threonine-protein kinase KIPK2 (949 aa).

4 disordered regions span residues 79–116 (LETS…VGPS), 323–344 (TALS…TEKS), 407–426 (STST…DKNV), and 495–525 (SSEK…SNLS). Positions 81-94 (TSASAGTSRSTSPS) are enriched in low complexity. Composition is skewed to polar residues over residues 407-420 (STST…NTSH) and 495-512 (SSEK…LGDY). The span at 513–525 (SSSTSMSEESNLS) shows a compositional bias: low complexity. Residues 559–898 (FNLLKKLGCG…AAEIKRHPFF (340 aa)) enclose the Protein kinase domain. ATP contacts are provided by residues 565–573 (LGCGDIGTV) and Lys588. The Proton acceptor role is filled by Asp684.

It belongs to the protein kinase superfamily. Ser/Thr protein kinase family. Interacts with KCBP, PERK8, PERK9, PERK10 and PERK13.

It carries out the reaction L-seryl-[protein] + ATP = O-phospho-L-seryl-[protein] + ADP + H(+). The catalysed reaction is L-threonyl-[protein] + ATP = O-phospho-L-threonyl-[protein] + ADP + H(+). In terms of biological role, serine/threonine-protein kinase that could be involved in the negative regulation of root growth. This chain is Serine/threonine-protein kinase KIPK2, found in Arabidopsis thaliana (Mouse-ear cress).